The primary structure comprises 354 residues: Arginase-2, mitochondrial (354 aa).

Residues Met-1–Ser-22 constitute a mitochondrion transit peptide. His-120, Asp-143, His-145, and Asp-147 together coordinate Mn(2+). Substrate-binding positions include His-145–Asn-149, Ser-156–Asn-158, and Asp-202. Residues Asp-251 and Asp-253 each coordinate Mn(2+). Residues Thr-265 and Glu-296 each contribute to the substrate site. A disordered region spans residues Tyr-334–Ile-354.

Belongs to the arginase family. In terms of assembly, homotrimer. Mn(2+) is required as a cofactor. In terms of tissue distribution, expressed most strongly in kidney and prostate, much less strongly in the brain, skeletal muscle, placenta, lung, mammary gland, macrophage, uterus, testis and gut, but apparently not in the liver, heart and pancreas. Expressed in activated T cells.

It is found in the mitochondrion. It carries out the reaction L-arginine + H2O = urea + L-ornithine. It functions in the pathway nitrogen metabolism; urea cycle; L-ornithine and urea from L-arginine: step 1/1. In terms of biological role, may play a role in the regulation of extra-urea cycle arginine metabolism and also in down-regulation of nitric oxide synthesis. Extrahepatic arginase functions to regulate L-arginine bioavailability to nitric oxid synthase (NOS). Arginine metabolism is a critical regulator of innate and adaptive immune responses. Seems to be involved in negative regulation of the survival capacity of activated CD4(+) and CD8(+) T cells. May suppress inflammation-related signaling in asthmatic airway epithelium. May contribute to the immune evasion of H.pylori by restricting M1 macrophage activation and polyamine metabolism. In fetal dendritic cells may play a role in promoting immune suppression and T cell TNF-alpha production during gestation. Regulates RPS6KB1 signaling, which promotes endothelial cell senescence and inflammation and implicates NOS3/eNOS dysfunction. Can inhibit endothelial autophagy independently of its enzymatic activity implicating mTORC2 signaling. Involved in vascular smooth muscle cell senescence and apoptosis independently of its enzymatic activity. Since NOS is found in the penile corpus cavernosum smooth muscle, the clitoral corpus cavernosum and the vagina, arginase-2 plays a role in both male and female sexual arousal. The polypeptide is Arginase-2, mitochondrial (ARG2) (Homo sapiens (Human)).